The sequence spans 316 residues: MTESFQHISVLLHESIEGLAIKPDGIYIDGTFGRGGHSRTILSQLGENGRLYSIDRDPQAIAEAKTIDDPRFTIVHGPFSGIAHYAKQHGLAGKVDGVLFDLGVSSPQLDDAERGFSFMKDGPLDMRMDPTSGIPVSQWLMEADLDDITWVIREFGEDKHARRIAKAIVAYRENEENEPLKRTSQLAKLISDAAPKSFKEKKHPATRAFQAFRIYINSELEEIDTALKGAAEILAPQGRLSVISFHSLEDRMVKRFIRKESQGPQVPHGIPMTEAQIQALGSANMKAIGKAIKPSKQEIELNPRSRSSVLRIAEKL.

Residues 35–37 (GGH), Asp-55, Phe-79, Asp-101, and Gln-108 each bind S-adenosyl-L-methionine.

The protein belongs to the methyltransferase superfamily. RsmH family.

It is found in the cytoplasm. It carries out the reaction cytidine(1402) in 16S rRNA + S-adenosyl-L-methionine = N(4)-methylcytidine(1402) in 16S rRNA + S-adenosyl-L-homocysteine + H(+). In terms of biological role, specifically methylates the N4 position of cytidine in position 1402 (C1402) of 16S rRNA. The chain is Ribosomal RNA small subunit methyltransferase H from Vibrio proteolyticus (Aeromonas proteolytica).